Reading from the N-terminus, the 752-residue chain is Granule-bound starch synthase 2, chloroplastic/amyloplastic (752 aa).

The N-terminal 57 residues, 1–57 (MMLSLGSDATVLPFHAKNLKFTPKLSTLNGDLAFSKGLGVGRLNCGSVRLNHKQHVR), are a transit peptide targeting the chloroplast. Disordered stretches follow at residues 116 to 146 (LEGN…SGSA) and 224 to 253 (FENF…EKPP). Lysine 275 contributes to the ADP-alpha-D-glucose binding site.

Belongs to the glycosyltransferase 1 family. Bacterial/plant glycogen synthase subfamily. In terms of tissue distribution, widely expressed.

The protein resides in the plastid. It is found in the chloroplast. Its subcellular location is the amyloplast. It carries out the reaction [(1-&gt;4)-alpha-D-glucosyl](n) + ADP-alpha-D-glucose = [(1-&gt;4)-alpha-D-glucosyl](n+1) + ADP + H(+). It functions in the pathway glycan biosynthesis; starch biosynthesis. This is Granule-bound starch synthase 2, chloroplastic/amyloplastic from Pisum sativum (Garden pea).